The chain runs to 297 residues: Ribosomal RNA small subunit methyltransferase A (297 aa).

Asparagine 28, leucine 30, glycine 55, glutamate 76, aspartate 101, and asparagine 126 together coordinate S-adenosyl-L-methionine.

The protein belongs to the class I-like SAM-binding methyltransferase superfamily. rRNA adenine N(6)-methyltransferase family. RsmA subfamily.

The protein resides in the cytoplasm. The enzyme catalyses adenosine(1518)/adenosine(1519) in 16S rRNA + 4 S-adenosyl-L-methionine = N(6)-dimethyladenosine(1518)/N(6)-dimethyladenosine(1519) in 16S rRNA + 4 S-adenosyl-L-homocysteine + 4 H(+). Functionally, specifically dimethylates two adjacent adenosines (A1518 and A1519) in the loop of a conserved hairpin near the 3'-end of 16S rRNA in the 30S particle. May play a critical role in biogenesis of 30S subunits. In Latilactobacillus sakei subsp. sakei (strain 23K) (Lactobacillus sakei subsp. sakei), this protein is Ribosomal RNA small subunit methyltransferase A.